Consider the following 351-residue polypeptide: Ion-translocating oxidoreductase complex subunit D (351 aa).

The next 4 helical transmembrane spans lie at 18–38 (IMLL…YFFG), 40–60 (GSLI…GAVL), 87–107 (LPPL…IVIA), and 121–141 (PAMV…TSWL). Threonine 185 carries the FMN phosphoryl threonine modification. Transmembrane regions (helical) follow at residues 211 to 231 (VLAG…GLLL), 241 to 261 (IPVS…MIAP), 264 to 284 (FASP…FFIA), 298 to 318 (LIFG…GGYP), and 320 to 340 (GVAF…HYTQ).

It belongs to the NqrB/RnfD family. As to quaternary structure, the complex is composed of six subunits: RnfA, RnfB, RnfC, RnfD, RnfE and RnfG. Requires FMN as cofactor.

Its subcellular location is the cell inner membrane. Part of a membrane-bound complex that couples electron transfer with translocation of ions across the membrane. This chain is Ion-translocating oxidoreductase complex subunit D, found in Yersinia pseudotuberculosis serotype O:1b (strain IP 31758).